The sequence spans 338 residues: Probable tRNA pseudouridine synthase B (338 aa).

D80 serves as the catalytic Nucleophile. The 76-residue stretch at L247 to M322 folds into the PUA domain.

It belongs to the pseudouridine synthase TruB family. Type 2 subfamily.

The enzyme catalyses uridine(55) in tRNA = pseudouridine(55) in tRNA. In terms of biological role, could be responsible for synthesis of pseudouridine from uracil-55 in the psi GC loop of transfer RNAs. This chain is Probable tRNA pseudouridine synthase B, found in Methanopyrus kandleri (strain AV19 / DSM 6324 / JCM 9639 / NBRC 100938).